Reading from the N-terminus, the 392-residue chain is Y' element ATP-dependent helicase YFL066C (392 aa).

Residues M1–A175 form the Helicase ATP-binding domain. A11–T18 is an ATP binding site. In terms of domain architecture, Helicase C-terminal spans K232–G381.

The protein belongs to the helicase family. Yeast subtelomeric Y' repeat subfamily.

Functionally, catalyzes DNA unwinding and is involved in telomerase-independent telomere maintenance. This chain is Y' element ATP-dependent helicase YFL066C, found in Saccharomyces cerevisiae (strain ATCC 204508 / S288c) (Baker's yeast).